A 228-amino-acid chain; its full sequence is L-ribulose-5-phosphate 4-epimerase UlaF (228 aa).

Residues 26 to 27 (GN), 43 to 44 (SG), and 72 to 73 (SS) each bind substrate. The Zn(2+) site is built by Asp74, His93, and His95. Catalysis depends on Asp118, which acts as the Proton donor/acceptor. His167 contributes to the Zn(2+) binding site. Tyr225 serves as the catalytic Proton donor/acceptor.

This sequence belongs to the aldolase class II family. AraD/FucA subfamily. It depends on Zn(2+) as a cofactor.

It catalyses the reaction L-ribulose 5-phosphate = D-xylulose 5-phosphate. It participates in cofactor degradation; L-ascorbate degradation; D-xylulose 5-phosphate from L-ascorbate: step 4/4. In terms of biological role, catalyzes the isomerization of L-ribulose 5-phosphate to D-xylulose 5-phosphate. Is involved in the anaerobic L-ascorbate utilization. The polypeptide is L-ribulose-5-phosphate 4-epimerase UlaF (Shigella sonnei (strain Ss046)).